A 99-amino-acid polypeptide reads, in one-letter code: MTEETITIDSISNGILNNLLTTLIQDIVARETTQQQLLKTRYPDLRSYYFDPNGSLDINGLQKQQESSQYIHCENCGRDVSANRLAAHLQRCLSRGARR.

The SGF11-type zinc finger occupies Ile-71–Cys-92.

The protein belongs to the SGF11 family. As to quaternary structure, component of the 1.8 MDa SAGA transcription coactivator-HAT complex. SAGA is built of 5 distinct domains with specialized functions. Within the SAGA complex, SUS1, SGF11, SGF73 and UBP8 form an additional subcomplex of SAGA called the DUB module (deubiquitination module). Interacts directly with SGF73, SUS1 and UBP8.

The protein localises to the nucleus. Functions as a component of the transcription regulatory histone acetylation (HAT) complex SAGA. At the promoters, SAGA is required for recruitment of the basal transcription machinery. It influences RNA polymerase II transcriptional activity through different activities such as TBP interaction and promoter selectivity, interaction with transcription activators, and chromatin modification through histone acetylation and deubiquitination. SAGA acetylates nucleosomal histone H3 to some extent (to form H3K9ac, H3K14ac, H3K18ac and H3K23ac). SAGA interacts with DNA via upstream activating sequences (UASs). Involved in transcriptional regulation of a subset of SAGA-regulated genes. Within the SAGA complex, participates in a subcomplex, that specifically deubiquitinates histones H2B. The protein is SAGA-associated factor 11 of Saccharomyces cerevisiae (strain YJM789) (Baker's yeast).